Here is a 56-residue protein sequence, read N- to C-terminus: Endoglucanase Cel5A (56 aa).

Glu45 acts as the Nucleophile in catalysis.

Belongs to the glycosyl hydrolase 5 (cellulase A) family.

It is found in the secreted. The protein resides in the extracellular space. It carries out the reaction Endohydrolysis of (1-&gt;4)-beta-D-glucosidic linkages in cellulose, lichenin and cereal beta-D-glucans.. In terms of biological role, has avicelase and carboxymethylcellulase activity. This Gloeophyllum trabeum (Brown rot fungus) protein is Endoglucanase Cel5A.